A 338-amino-acid polypeptide reads, in one-letter code: Anthranilate phosphoribosyltransferase (338 aa).

5-phospho-alpha-D-ribose 1-diphosphate is bound by residues G83, 86–87 (GD), S91, 93–96 (NCST), 111–119 (KHGNRAVSS), and A123. Residue G83 coordinates anthranilate. S95 is a binding site for Mg(2+). N114 is a binding site for anthranilate. Residue R169 participates in anthranilate binding. Residues D228 and E229 each contribute to the Mg(2+) site.

The protein belongs to the anthranilate phosphoribosyltransferase family. Homodimer. Mg(2+) is required as a cofactor.

The enzyme catalyses N-(5-phospho-beta-D-ribosyl)anthranilate + diphosphate = 5-phospho-alpha-D-ribose 1-diphosphate + anthranilate. Its pathway is amino-acid biosynthesis; L-tryptophan biosynthesis; L-tryptophan from chorismate: step 2/5. In terms of biological role, catalyzes the transfer of the phosphoribosyl group of 5-phosphorylribose-1-pyrophosphate (PRPP) to anthranilate to yield N-(5'-phosphoribosyl)-anthranilate (PRA). The protein is Anthranilate phosphoribosyltransferase of Nitratidesulfovibrio vulgaris (strain DSM 19637 / Miyazaki F) (Desulfovibrio vulgaris).